The sequence spans 475 residues: ATP-dependent protease ATPase subunit HslU1 (475 aa).

The N-terminal 27 residues, 1-27 (MMRRVTSSLPSALKLGRSLGPNVRFSG), are a transit peptide targeting the mitochondrion. ATP is bound by residues isoleucine 66, 108–113 (GVGKTE), aspartate 286, glutamate 353, and arginine 425.

It belongs to the ClpX chaperone family. HslU subfamily. As to quaternary structure, a double ring-shaped homohexamer of HslV is capped on each side by a ring-shaped HslU homohexamer. The assembly of the HslU/HslV complex (HslVU) is dependent on binding of ATP.

Its subcellular location is the mitochondrion matrix. The protein localises to the kinetoplast. ATPase subunit of a proteasome-like degradation complex; this subunit has chaperone activity. The binding of ATP and its subsequent hydrolysis by HslU are essential for unfolding of protein substrates subsequently hydrolyzed by HslV. HslU recognizes the N-terminal part of its protein substrates and unfolds these before they are guided to HslV for hydrolysis. The HslVU protease complex functions in mitochondrial DNA replication by regulating DNA helicase PIF2 protein levels. The protein is ATP-dependent protease ATPase subunit HslU1 (HslU1) of Trypanosoma brucei brucei (strain 927/4 GUTat10.1).